The following is a 149-amino-acid chain: Calmodulin (149 aa).

Ala-2 is subject to N-acetylalanine. 4 EF-hand domains span residues 8–43 (EQIAEFKEAFSLFDKDGDGSITTKELGTVMRSLGQN), 44–79 (PTEAELQDMINEVDADGNGTIDFPEFLNLMARKMKD), 81–116 (DSEEELKEAFKVFDKDQNGYISAADWRHVMTNLGEK), and 117–149 (LTDEEVDEMIREADVDGDGQVNYEEFVKMMMAK). The Ca(2+) site is built by Asp-21, Asp-23, Asp-25, Ser-27, Glu-32, Asp-57, Asp-59, Asn-61, Thr-63, Glu-68, Asp-94, Asp-96, Asn-98, Tyr-100, and Asp-105. Lys-116 carries the N6,N6,N6-trimethyllysine modification. The Ca(2+) site is built by Asp-130, Asp-132, Asp-134, Gln-136, and Glu-141.

This sequence belongs to the calmodulin family.

Calmodulin mediates the control of a large number of enzymes, ion channels and other proteins by Ca(2+). Among the enzymes to be stimulated by the calmodulin-Ca(2+) complex are a number of protein kinases and phosphatases. The polypeptide is Calmodulin (Mougeotia scalaris (Green alga)).